Here is a 320-residue protein sequence, read N- to C-terminus: Ribonuclease Z (320 aa).

Residues H62, H64, D66, H67, H139, D210, and H268 each coordinate Zn(2+). D66 (proton acceptor) is an active-site residue.

It belongs to the RNase Z family. Homodimer. Zn(2+) is required as a cofactor.

It catalyses the reaction Endonucleolytic cleavage of RNA, removing extra 3' nucleotides from tRNA precursor, generating 3' termini of tRNAs. A 3'-hydroxy group is left at the tRNA terminus and a 5'-phosphoryl group is left at the trailer molecule.. Functionally, zinc phosphodiesterase, which displays some tRNA 3'-processing endonuclease activity. Probably involved in tRNA maturation, by removing a 3'-trailer from precursor tRNA. The polypeptide is Ribonuclease Z (Cyanothece sp. (strain PCC 7425 / ATCC 29141)).